The following is a 96-amino-acid chain: Large ribosomal subunit protein uL23 (96 aa).

Belongs to the universal ribosomal protein uL23 family. In terms of assembly, part of the 50S ribosomal subunit. Contacts protein L29, and trigger factor when it is bound to the ribosome.

In terms of biological role, one of the early assembly proteins it binds 23S rRNA. One of the proteins that surrounds the polypeptide exit tunnel on the outside of the ribosome. Forms the main docking site for trigger factor binding to the ribosome. The chain is Large ribosomal subunit protein uL23 from Thermus thermophilus (strain ATCC BAA-163 / DSM 7039 / HB27).